The following is a 251-amino-acid chain: Triosephosphate isomerase (251 aa).

9–11 (NWK) is a substrate binding site. The Electrophile role is filled by histidine 95. Glutamate 167 (proton acceptor) is an active-site residue. Substrate is bound by residues glycine 173, serine 213, and 234-235 (GG). Serine 213 bears the Phosphoserine mark.

Belongs to the triosephosphate isomerase family. In terms of assembly, homodimer.

The protein resides in the cytoplasm. It carries out the reaction D-glyceraldehyde 3-phosphate = dihydroxyacetone phosphate. It functions in the pathway carbohydrate biosynthesis; gluconeogenesis. Its pathway is carbohydrate degradation; glycolysis; D-glyceraldehyde 3-phosphate from glycerone phosphate: step 1/1. Its function is as follows. Involved in the gluconeogenesis. Catalyzes stereospecifically the conversion of dihydroxyacetone phosphate (DHAP) to D-glyceraldehyde-3-phosphate (G3P). This chain is Triosephosphate isomerase, found in Bacillus mycoides (strain KBAB4) (Bacillus weihenstephanensis).